The chain runs to 48 residues: Phosphatidylserine decarboxylase proenzyme (48 aa).

The protein belongs to the phosphatidylserine decarboxylase family. Type 1 subfamily. Pyruvate serves as cofactor.

It catalyses the reaction a 1,2-diacyl-sn-glycero-3-phospho-L-serine + H(+) = a 1,2-diacyl-sn-glycero-3-phosphoethanolamine + CO2. The protein operates within phospholipid metabolism; phosphatidylethanolamine biosynthesis; phosphatidylethanolamine from CDP-diacylglycerol: step 2/2. The sequence is that of Phosphatidylserine decarboxylase proenzyme (psd) from Azotobacter vinelandii.